A 30-amino-acid chain; its full sequence is Cyclotide hyen-C (30 aa).

The segment at residues 1-30 (GTHPCQETCVTSTRCSTQGCHCNWPICFKN) is a cross-link (cyclopeptide (Gly-Asn)). 3 cysteine pairs are disulfide-bonded: C5-C20, C9-C22, and C15-C27.

Post-translationally, this is a cyclic peptide. As to expression, detected in stems (at protein level).

Probably participates in a plant defense mechanism. Does not display any cytotoxic activity towards K562, HeLa, MCF-7, HUVEC or red blood cells. Does not bind to phospholipd membranes containing 1-palmitoyl 2-oleoyl phosphatidylcholine (POPC) or 1-palmitoyl-2-oleophosphatidylethanolamine (POPE). The chain is Cyclotide hyen-C from Pigea enneasperma (Spade flower).